A 184-amino-acid polypeptide reads, in one-letter code: MVVVAVSGQPGSGKTTIAREVARVLKVPLVSSGTIFRELAAKMGMDLVEFHRYAETNPEIDKMIDALTAEKAKAGDVVVEGHLAAWVARPYADVCIYLKASSEVRAKRVSIRDKKSFEEALREVREREELNRKRYLSLYGIDIHNLTIFDLVLDTSYLSINDAVRISLDYICTTLEIKYSKKIC.

8–16 (GQPGSGKTT) contributes to the ATP binding site.

It belongs to the cytidylate kinase family. Type 2 subfamily.

The protein localises to the cytoplasm. It catalyses the reaction CMP + ATP = CDP + ADP. The catalysed reaction is dCMP + ATP = dCDP + ADP. The sequence is that of Cytidylate kinase from Pyrobaculum neutrophilum (strain DSM 2338 / JCM 9278 / NBRC 100436 / V24Sta) (Thermoproteus neutrophilus).